The following is a 349-amino-acid chain: MSLLPPLTIRLCSPRGFCAGVDRAIQIVILALKKYGAPVYVRHEIVHNRYVVEGLQQRGAVFVEELDEIPEKHRGQPVVFSAHGVPKSVSEKASLYNLFYLDATCPLVSKVHKQAIRHQRHGRHVILIGHSGHPEVIGTMGQLEKGAVTLIETVEDALYYQPENPNKLGFVTQTTLSVEDTAGILDVLQKRFPALESPATESICYATTNRQEAVKAAALGSDLFLIVGSSNSSNARRLVEVAERFGARQSILVQRADDIDFDRLGTLSVISLSAGASAPEIIVDEIITAFRKRYNVKIELAETAVETQQFLVNRELRDVILTPQDMAFVSGGVKTGRNDDTQMLKIEEK.

[4Fe-4S] cluster is bound at residue Cys-18. The (2E)-4-hydroxy-3-methylbut-2-enyl diphosphate site is built by His-47 and His-83. Dimethylallyl diphosphate-binding residues include His-47 and His-83. His-47 and His-83 together coordinate isopentenyl diphosphate. A [4Fe-4S] cluster-binding site is contributed by Cys-105. A (2E)-4-hydroxy-3-methylbut-2-enyl diphosphate-binding site is contributed by His-133. His-133 is a binding site for dimethylallyl diphosphate. His-133 serves as a coordination point for isopentenyl diphosphate. Catalysis depends on Glu-135, which acts as the Proton donor. Thr-174 contributes to the (2E)-4-hydroxy-3-methylbut-2-enyl diphosphate binding site. Cys-204 contacts [4Fe-4S] cluster. Residues Ser-232, Ser-233, Asn-234, and Ser-277 each coordinate (2E)-4-hydroxy-3-methylbut-2-enyl diphosphate. The dimethylallyl diphosphate site is built by Ser-232, Ser-233, Asn-234, and Ser-277. Isopentenyl diphosphate-binding residues include Ser-232, Ser-233, Asn-234, and Ser-277.

Belongs to the IspH family. [4Fe-4S] cluster serves as cofactor.

The catalysed reaction is isopentenyl diphosphate + 2 oxidized [2Fe-2S]-[ferredoxin] + H2O = (2E)-4-hydroxy-3-methylbut-2-enyl diphosphate + 2 reduced [2Fe-2S]-[ferredoxin] + 2 H(+). The enzyme catalyses dimethylallyl diphosphate + 2 oxidized [2Fe-2S]-[ferredoxin] + H2O = (2E)-4-hydroxy-3-methylbut-2-enyl diphosphate + 2 reduced [2Fe-2S]-[ferredoxin] + 2 H(+). Its pathway is isoprenoid biosynthesis; dimethylallyl diphosphate biosynthesis; dimethylallyl diphosphate from (2E)-4-hydroxy-3-methylbutenyl diphosphate: step 1/1. It functions in the pathway isoprenoid biosynthesis; isopentenyl diphosphate biosynthesis via DXP pathway; isopentenyl diphosphate from 1-deoxy-D-xylulose 5-phosphate: step 6/6. Catalyzes the conversion of 1-hydroxy-2-methyl-2-(E)-butenyl 4-diphosphate (HMBPP) into a mixture of isopentenyl diphosphate (IPP) and dimethylallyl diphosphate (DMAPP). Acts in the terminal step of the DOXP/MEP pathway for isoprenoid precursor biosynthesis. The protein is 4-hydroxy-3-methylbut-2-enyl diphosphate reductase of Bartonella bacilliformis (strain ATCC 35685 / KC583 / Herrer 020/F12,63).